A 181-amino-acid chain; its full sequence is Cytochrome c oxidase subunit 2 (181 aa).

The Cu cation site is built by Cys126, Glu128, Cys130, His134, and Met137. Mg(2+) is bound at residue Glu128.

It belongs to the cytochrome c oxidase subunit 2 family. In terms of assembly, component of the cytochrome c oxidase (complex IV, CIV), a multisubunit enzyme composed of a catalytic core of 3 subunits and several supernumerary subunits. The complex exists as a monomer or a dimer and forms supercomplexes (SCs) in the inner mitochondrial membrane with ubiquinol-cytochrome c oxidoreductase (cytochrome b-c1 complex, complex III, CIII). Cu cation is required as a cofactor.

Its subcellular location is the mitochondrion inner membrane. The catalysed reaction is 4 Fe(II)-[cytochrome c] + O2 + 8 H(+)(in) = 4 Fe(III)-[cytochrome c] + 2 H2O + 4 H(+)(out). In terms of biological role, component of the cytochrome c oxidase, the last enzyme in the mitochondrial electron transport chain which drives oxidative phosphorylation. The respiratory chain contains 3 multisubunit complexes succinate dehydrogenase (complex II, CII), ubiquinol-cytochrome c oxidoreductase (cytochrome b-c1 complex, complex III, CIII) and cytochrome c oxidase (complex IV, CIV), that cooperate to transfer electrons derived from NADH and succinate to molecular oxygen, creating an electrochemical gradient over the inner membrane that drives transmembrane transport and the ATP synthase. Cytochrome c oxidase is the component of the respiratory chain that catalyzes the reduction of oxygen to water. Electrons originating from reduced cytochrome c in the intermembrane space (IMS) are transferred via the dinuclear copper A center (CU(A)) of subunit 2 and heme A of subunit 1 to the active site in subunit 1, a binuclear center (BNC) formed by heme A3 and copper B (CU(B)). The BNC reduces molecular oxygen to 2 water molecules using 4 electrons from cytochrome c in the IMS and 4 protons from the mitochondrial matrix. The polypeptide is Cytochrome c oxidase subunit 2 (COII) (Paramecium primaurelia).